Reading from the N-terminus, the 332-residue chain is Autoinducer 2 import system permease protein LsrD (332 aa).

The next 7 helical transmembrane spans lie at Leu5–Leu25, Ile43–Ile63, Gly83–Phe103, Leu116–Met136, Leu160–Leu180, Ile210–Val230, and Ile259–Leu279.

The protein belongs to the binding-protein-dependent transport system permease family. AraH/RbsC subfamily. As to quaternary structure, the complex is composed of two ATP-binding proteins (LsrA), two transmembrane proteins (LsrC and LsrD) and a solute-binding protein (LsrB).

The protein resides in the cell inner membrane. In terms of biological role, part of the ABC transporter complex LsrABCD involved in autoinducer 2 (AI-2) import. Probably responsible for the translocation of the substrate across the membrane. The sequence is that of Autoinducer 2 import system permease protein LsrD (lsrD) from Klebsiella pneumoniae subsp. pneumoniae (strain ATCC 700721 / MGH 78578).